We begin with the raw amino-acid sequence, 528 residues long: 2-isopropylmalate synthase (528 aa).

A Pyruvate carboxyltransferase domain is found at 12 to 279; the sequence is IRIFDTTLRD…DSSINTPRIV (268 aa). Positions 21, 214, 216, and 250 each coordinate Mn(2+). Positions 401-528 are regulatory domain; it reads RLASMTISDV…TTEAPAPATA (128 aa).

Belongs to the alpha-IPM synthase/homocitrate synthase family. LeuA type 1 subfamily. Homodimer. Requires Mn(2+) as cofactor.

Its subcellular location is the cytoplasm. It catalyses the reaction 3-methyl-2-oxobutanoate + acetyl-CoA + H2O = (2S)-2-isopropylmalate + CoA + H(+). Its pathway is amino-acid biosynthesis; L-leucine biosynthesis; L-leucine from 3-methyl-2-oxobutanoate: step 1/4. Catalyzes the condensation of the acetyl group of acetyl-CoA with 3-methyl-2-oxobutanoate (2-ketoisovalerate) to form 3-carboxy-3-hydroxy-4-methylpentanoate (2-isopropylmalate). The sequence is that of 2-isopropylmalate synthase from Stenotrophomonas maltophilia (strain R551-3).